We begin with the raw amino-acid sequence, 361 residues long: Protein RecA (361 aa).

77 to 84 (GPESSGKT) is a binding site for ATP.

The protein belongs to the RecA family.

It localises to the cytoplasm. Functionally, can catalyze the hydrolysis of ATP in the presence of single-stranded DNA, the ATP-dependent uptake of single-stranded DNA by duplex DNA, and the ATP-dependent hybridization of homologous single-stranded DNAs. It interacts with LexA causing its activation and leading to its autocatalytic cleavage. The polypeptide is Protein RecA (Brucella abortus (strain S19)).